A 474-amino-acid chain; its full sequence is Homeobox protein PKNOX2 (474 aa).

The segment at 1–42 (MMQHASPAPALTMMATQNVPPPPYQDSPQMTATAQPPSKAQA) is disordered. Over residues 26 to 38 (DSPQMTATAQPPS) the composition is skewed to polar residues. The MEIS N-terminal domain maps to 96–179 (GSECITSASF…MHSDNLLRND (84 aa)). The homeobox DNA-binding region spans 291-350 (KRGVLPKHATNIMRSWLFQHLMHPYPTEDEKRQIAAQTNLTLLQVNNWFINARRRILQPM). Disordered regions lie at residues 351–371 (LDAS…QHRP), 385–405 (LQQQ…LDNL), and 423–474 (AAHD…DSLE). The segment covering 361-371 (KAKKIKSQHRP) has biased composition (basic residues). Residues 429–456 (LDGTEEEDEDDMEEEEEEEEELEEEADE) are compositionally biased toward acidic residues.

Belongs to the TALE/MEIS homeobox family.

It localises to the nucleus. This Mus musculus (Mouse) protein is Homeobox protein PKNOX2 (Pknox2).